The primary structure comprises 185 residues: Ribosome-recycling factor (185 aa).

The protein belongs to the RRF family.

It is found in the cytoplasm. Responsible for the release of ribosomes from messenger RNA at the termination of protein biosynthesis. May increase the efficiency of translation by recycling ribosomes from one round of translation to another. The polypeptide is Ribosome-recycling factor (Salmonella paratyphi A (strain ATCC 9150 / SARB42)).